Here is a 294-residue protein sequence, read N- to C-terminus: Phosphoprotein (294 aa).

The interval 12 to 28 is binding to monomeric RNA-free nucleoprotein; sequence MGNEAAKAAEAFQRSLK. Positions 52-97 are disordered; sequence KPTISKSTKVTTPPERRNAWGEKPDTTRNQTEEARNEATLEDTSRL. The segment covering 65 to 97 has biased composition (basic and acidic residues); sequence PERRNAWGEKPDTTRNQTEEARNEATLEDTSRL. Residue S106 is modified to Phosphoserine. The binding to host phosphatase PP1 stretch occupies residues 123-128; it reads KKKVTF. Residues 135-157 are binding to protein M2-1; that stretch reads RYTKLEMEALELLSDNEDDDAES. Residues S148, S157, S158, S168, and S171 each carry the phosphoserine modification. Positions 169-194 are oligomerization and binding to RNA-directed RNA polymerase L; it reads ALSLEARLESIDEKLSMILGLLRTLN. Positions 234–294 are disordered; sequence MKEEAKQKSK…PDDDLYSLTM (61 aa). A binding to RNA-directed RNA polymerase L region spans residues 251–279; sequence LTEKAKELNKIVEDESTSGESEEEEEEED. Residues 253-263 are compositionally biased toward basic and acidic residues; the sequence is EKAKELNKIVE. Acidic residues predominate over residues 264–294; it reads DESTSGESEEEEEEEDEEESNPDDDLYSLTM. Residues 281–294 are binding to the N-RNA complex; sequence EESNPDDDLYSLTM.

This sequence belongs to the pneumoviridae phosphoprotein P family. As to quaternary structure, homotetramer. Interacts with protein M2-1; the interaction between the two tetramers is required for the anti-termination and elongation transcriptional activities of protein M2-1. Interacts with host phosphatase PP1; this interaction recruits PP1 to the inclusion bodies. Formation of a complex PP1/M2-1/P allows P to target host PP1 phosphatase to the M2-1 substrate. Interacts with the nucleoprotein N; the phosphorylated phosphoprotein P binds to N-RNA complex. Interacts with the monomeric RNA-free nucleoprotein N. Interacts with RNA-directed RNA polymerase L (via N-terminus); the association of P and L forms the polymerase complex. In terms of processing, constitutively phosphorylated by host.

Its subcellular location is the virion. The protein resides in the host cytoplasm. Its function is as follows. Plays critical roles in regulating RNA replication and transcription through its interactions with multiple proteins. Tethers the RNA-directed RNA polymerase L to the nucleoprotein-RNA complex. Recruits the M2-1 protein, a processivity factor that is required for efficient transcription of viral RNA. Acts as a chaperone for neo-synthesized nucleoprotein by forming an N-P complex that preserves N in a monomeric and RNA-free state and prevents the association of nascent N with host cell RNAs. Recruits the host phosphatase PP1 to inclusion bodies to regulate viral transcription. This is Phosphoprotein from Avian metapneumovirus (isolate Canada goose/Minnesota/15a/2001) (AMPV).